An 88-amino-acid chain; its full sequence is ATP synthase epsilon chain (88 aa).

The protein belongs to the ATPase epsilon chain family. In terms of assembly, F-type ATPases have 2 components, CF(1) - the catalytic core - and CF(0) - the membrane proton channel. CF(1) has five subunits: alpha(3), beta(3), gamma(1), delta(1), epsilon(1). CF(0) has three main subunits: a, b and c.

It is found in the cell inner membrane. Its function is as follows. Produces ATP from ADP in the presence of a proton gradient across the membrane. This is ATP synthase epsilon chain (atpC) from Chlorobium limicola.